We begin with the raw amino-acid sequence, 105 residues long: Small ribosomal subunit protein eS25 (105 aa).

This sequence belongs to the eukaryotic ribosomal protein eS25 family. In terms of assembly, component of the small ribosomal subunit. Mature ribosomes consist of a small (40S) and a large (60S) subunit. The 40S subunit contains about 32 different proteins and 1 molecule of RNA (18S). The 60S subunit contains 45 different proteins and 3 molecules of RNA (25S, 5.8S and 5S).

It localises to the cytoplasm. Component of the ribosome, a large ribonucleoprotein complex responsible for the synthesis of proteins in the cell. The small ribosomal subunit (SSU) binds messenger RNAs (mRNAs) and translates the encoded message by selecting cognate aminoacyl-transfer RNA (tRNA) molecules. The large subunit (LSU) contains the ribosomal catalytic site termed the peptidyl transferase center (PTC), which catalyzes the formation of peptide bonds, thereby polymerizing the amino acids delivered by tRNAs into a polypeptide chain. The nascent polypeptides leave the ribosome through a tunnel in the LSU and interact with protein factors that function in enzymatic processing, targeting, and the membrane insertion of nascent chains at the exit of the ribosomal tunnel. This chain is Small ribosomal subunit protein eS25 (RPS25B), found in Candida albicans (strain SC5314 / ATCC MYA-2876) (Yeast).